The primary structure comprises 592 residues: Ferric-chelate reductase 1 (592 aa).

The helical transmembrane segment at A2 to A22 threads the bilayer. Residues I13–P179 enclose the Reelin domain. Residues N85, N308, N321, and N353 are each glycosylated (N-linked (GlcNAc...) asparagine). A DOMON domain is found at E216–G331. The region spanning D335 to H534 is the Cytochrome b561 domain. A helical transmembrane segment spans residues A372–A392. The heme b site is built by H373 and H414. 5 consecutive transmembrane segments (helical) span residues R415–Y435, H446–F466, V477–L499, Y515–A535, and V569–I589. 2 residues coordinate heme b: H446 and H482.

The protein belongs to the FRRS1 family. Heme b serves as cofactor. In terms of tissue distribution, expressed in spleen, liver and kidney with low expression in brain. Localizes in adult brain to the choroid plexus of the fourth, third, and lateral ventricles and to ependymal cells that line the ventricles.

The protein localises to the membrane. Its function is as follows. Ferric-chelate reductases reduce Fe(3+) to Fe(2+) before its transport from the endosome to the cytoplasm. In Mus musculus (Mouse), this protein is Ferric-chelate reductase 1 (FRRS1).